Here is a 120-residue protein sequence, read N- to C-terminus: Small ribosomal subunit protein uS13 (120 aa).

The tract at residues 96-120 (PCRGQRTRTNARTRKGPRKAIAGKK) is disordered.

The protein belongs to the universal ribosomal protein uS13 family. As to quaternary structure, part of the 30S ribosomal subunit. Forms a loose heterodimer with protein S19. Forms two bridges to the 50S subunit in the 70S ribosome.

Functionally, located at the top of the head of the 30S subunit, it contacts several helices of the 16S rRNA. In the 70S ribosome it contacts the 23S rRNA (bridge B1a) and protein L5 of the 50S subunit (bridge B1b), connecting the 2 subunits; these bridges are implicated in subunit movement. Contacts the tRNAs in the A and P-sites. The polypeptide is Small ribosomal subunit protein uS13 (Dechloromonas aromatica (strain RCB)).